The chain runs to 164 residues: Putative pre-16S rRNA nuclease (164 aa).

The protein belongs to the YqgF nuclease family.

It is found in the cytoplasm. Could be a nuclease involved in processing of the 5'-end of pre-16S rRNA. This is Putative pre-16S rRNA nuclease from Rhizobium johnstonii (strain DSM 114642 / LMG 32736 / 3841) (Rhizobium leguminosarum bv. viciae).